The primary structure comprises 195 residues: Imidazoleglycerol-phosphate dehydratase (195 aa).

This sequence belongs to the imidazoleglycerol-phosphate dehydratase family.

It is found in the cytoplasm. The catalysed reaction is D-erythro-1-(imidazol-4-yl)glycerol 3-phosphate = 3-(imidazol-4-yl)-2-oxopropyl phosphate + H2O. Its pathway is amino-acid biosynthesis; L-histidine biosynthesis; L-histidine from 5-phospho-alpha-D-ribose 1-diphosphate: step 6/9. This chain is Imidazoleglycerol-phosphate dehydratase, found in Campylobacter concisus (strain 13826).